The primary structure comprises 596 residues: Inactive metallocarboxypeptidase ECM14 (596 aa).

A signal peptide spans 1-22 (MHFSVRLSLFLTLASSLPLVSA). Positions 23–184 (VPQHEDQAYT…QTIYESYPKA (162 aa)) are excised as a propeptide. The segment at 182–211 (PKAGSASPSQQGPTTRRFSPSASTSKSKPH) is disordered. Polar residues predominate over residues 187–207 (ASPSQQGPTTRRFSPSASTSK). In terms of domain architecture, Peptidase M14 spans 220–546 (DYQPLSVLLP…RAMVAMGKFL (327 aa)). The Zn(2+) site is built by H285 and E288. Substrate is bound by residues 285–288 (HARE), R343, and 360–361 (DH). C354 and C377 form a disulfide bridge. A glycan (N-linked (GlcNAc...) asparagine) is linked at N370. H417 is a Zn(2+) binding site. Residue 418–419 (SY) participates in substrate binding. The tract at residues 557–596 (DGLRASEEPQDYDNDLEDGEDDKDEQGSTVFRAQADDLQS) is disordered. Acidic residues predominate over residues 564–580 (EPQDYDNDLEDGEDDKD). The segment covering 583-596 (GSTVFRAQADDLQS) has biased composition (polar residues).

It belongs to the peptidase M14 family. Zn(2+) serves as cofactor.

Its subcellular location is the vacuole. It localises to the secreted. Functionally, inactive carboxypeptidase that may play a role in cell wall organization and biogenesis. The protein is Inactive metallocarboxypeptidase ECM14 (ECM14) of Arthroderma benhamiae (strain ATCC MYA-4681 / CBS 112371) (Trichophyton mentagrophytes).